Reading from the N-terminus, the 92-residue chain is DNA-directed RNA polymerase subunit Rpo11 (92 aa).

This sequence belongs to the archaeal Rpo11/eukaryotic RPB11/RPC19 RNA polymerase subunit family. As to quaternary structure, part of the RNA polymerase complex.

It localises to the cytoplasm. The catalysed reaction is RNA(n) + a ribonucleoside 5'-triphosphate = RNA(n+1) + diphosphate. DNA-dependent RNA polymerase (RNAP) catalyzes the transcription of DNA into RNA using the four ribonucleoside triphosphates as substrates. In Methanosarcina barkeri (strain Fusaro / DSM 804), this protein is DNA-directed RNA polymerase subunit Rpo11.